An 862-amino-acid polypeptide reads, in one-letter code: DNA mismatch repair protein MutS (862 aa).

ATP is bound at residue 608-615 (GPNMAGKS).

The protein belongs to the DNA mismatch repair MutS family.

This protein is involved in the repair of mismatches in DNA. It is possible that it carries out the mismatch recognition step. This protein has a weak ATPase activity. This is DNA mismatch repair protein MutS from Bacteroides thetaiotaomicron (strain ATCC 29148 / DSM 2079 / JCM 5827 / CCUG 10774 / NCTC 10582 / VPI-5482 / E50).